A 95-amino-acid chain; its full sequence is Putative pterin-4-alpha-carbinolamine dehydratase (95 aa).

The protein belongs to the pterin-4-alpha-carbinolamine dehydratase family.

It carries out the reaction (4aS,6R)-4a-hydroxy-L-erythro-5,6,7,8-tetrahydrobiopterin = (6R)-L-erythro-6,7-dihydrobiopterin + H2O. The sequence is that of Putative pterin-4-alpha-carbinolamine dehydratase from Thermosynechococcus vestitus (strain NIES-2133 / IAM M-273 / BP-1).